The primary structure comprises 317 residues: Melanocyte-stimulating hormone receptor (317 aa).

The Extracellular segment spans residues 1-37 (MPMQGAQRRLLGSLNSIPTATPNLGLAANHTGAPCLE). A glycan (N-linked (GlcNAc...) asparagine) is linked at asparagine 29. A helical membrane pass occupies residues 38 to 63 (VSIPDWLFLSLGLVSLVQNVLVVAAI). Residues 64–72 (AKNRNLHSP) lie on the Cytoplasmic side of the membrane. The chain crosses the membrane as a helical span at residues 73–93 (MYCFICCLALSDLLVSGSNML). Topologically, residues 94–118 (ETAVILMLEAGALATRASVVQQLQN) are extracellular. A helical transmembrane segment spans residues 119 to 140 (TIDVLTCSSMLCSLCFLGAIAL). Residues 141-163 (DRYVSIFYALRYHSIVTLPRARR) lie on the Cytoplasmic side of the membrane. The chain crosses the membrane as a helical span at residues 164 to 183 (AIAATWVASVLSSTLFIAYC). Topologically, residues 184-191 (DHAAVLLC) are extracellular. The helical transmembrane segment at 192–211 (LVVFFLAMLVLMAVLYVHML) threads the bilayer. The Cytoplasmic segment spans residues 212–240 (ARACQHAQGITRLHKRQLPAHQGFGLRGA). The helical transmembrane segment at 241 to 266 (ATLTILLGIFFLCWGPFFLHLMLVVL) threads the bilayer. Residues 267-279 (CPQHLTCSCIFKN) lie on the Extracellular side of the membrane. Residues 280–300 (FKVFLTLIICNTIIDPLIYAF) traverse the membrane as a helical segment. Over 301–317 (RSQELCRTLKEVLLCSW) the chain is Cytoplasmic. Residue cysteine 315 is the site of S-palmitoyl cysteine attachment.

Belongs to the G-protein coupled receptor 1 family. As to quaternary structure, interacts with MGRN1, but does not undergo MGRN1-mediated ubiquitination; this interaction competes with GNAS-binding and thus inhibits agonist-induced cAMP production. Interacts with OPN3; the interaction results in a decrease in MC1R-mediated cAMP signaling and ultimately a decrease in melanin production in melanocytes.

The protein resides in the cell membrane. Its function is as follows. Receptor for MSH (alpha, beta and gamma) and ACTH. The activity of this receptor is mediated by G proteins which activate adenylate cyclase. Mediates melanogenesis, the production of eumelanin (black/brown) and phaeomelanin (red/yellow), via regulation of cAMP signaling in melanocytes. This Alouatta seniculus (Red howler monkey) protein is Melanocyte-stimulating hormone receptor (MC1R).